The sequence spans 826 residues: Elongator complex protein 2 (826 aa).

WD repeat units lie at residues 13–53, 56–100, 105–152, 158–200, 205–246, 281–329, 339–378, 386–425, 436–474, 565–609, 612–651, 667–706, 712–753, and 777–826; these read CCPN…VVTN, GHTA…LLKA, GHEG…VMCL, GNGF…FQKV, GHED…TSLE, GHEN…GVWL, GNTLGFYDCQFNEDGSMIIAHAFHGALHLWKQNTVNPREW, GHFDGVQDLVWDPEGEFIITVGTDQTTRLFAPWKRKDQSQ, IHGYDLKCLAMINRFQFVSGADEKVLRVFSAPRNFVENF, GHGY…QVQN, FHSLTVTQMAFSPNEKFLLAVSRDRTWSLWKKQDTISPEF, VHSRIIWSCDWSPDSKYFFTGSRDKKVVVWGECDSTDDCI, PCSS…CLYT, and SHTL…KCAL.

It belongs to the WD repeat ELP2 family. As to quaternary structure, component of the elongator complex which consists of ELP1, ELP2, ELP3, ELP4, ELP5 and ELP6. Interacts with STAT3 and JAKs.

It localises to the cytoplasm. Its subcellular location is the nucleus. It participates in tRNA modification; 5-methoxycarbonylmethyl-2-thiouridine-tRNA biosynthesis. Functionally, component of the elongator complex which is required for multiple tRNA modifications, including mcm5U (5-methoxycarbonylmethyl uridine), mcm5s2U (5-methoxycarbonylmethyl-2-thiouridine), and ncm5U (5-carbamoylmethyl uridine). The elongator complex catalyzes the formation of carboxymethyluridine in the wobble base at position 34 in tRNAs. In Homo sapiens (Human), this protein is Elongator complex protein 2 (ELP2).